The sequence spans 511 residues: Glucans biosynthesis protein G (511 aa).

Positions 1–22 (MMKMRWLSAAVMLTLYTSSSWA) are cleaved as a signal peptide.

It belongs to the OpgD/OpgG family.

The protein localises to the periplasm. Its pathway is glycan metabolism; osmoregulated periplasmic glucan (OPG) biosynthesis. Functionally, involved in the biosynthesis of osmoregulated periplasmic glucans (OPGs). The polypeptide is Glucans biosynthesis protein G (Shigella dysenteriae serotype 1 (strain Sd197)).